We begin with the raw amino-acid sequence, 340 residues long: Manganese-dependent ADP-ribose/CDP-alcohol diphosphatase (340 aa).

An N-acetylmethionine modification is found at M1. Zn(2+) contacts are provided by D25, Q27, D74, N110, H241, H278, and H280.

The protein belongs to the ADPRibase-Mn family. In terms of assembly, monomer. Mg(2+) serves as cofactor.

It carries out the reaction CDP-choline + H2O = phosphocholine + CMP + 2 H(+). It catalyses the reaction ADP-D-ribose + H2O = D-ribose 5-phosphate + AMP + 2 H(+). The catalysed reaction is CDP-glycerol + H2O = sn-glycerol 3-phosphate + CMP + 2 H(+). Functionally, hydrolyzes ADP-ribose, IDP-ribose, CDP-glycerol, CDP-choline and CDP-ethanolamine, but not other non-reducing ADP-sugars or CDP-glucose. May be involved in immune cell signaling as suggested by the second-messenger role of ADP-ribose, which activates TRPM2 as a mediator of oxidative/nitrosative stress. This chain is Manganese-dependent ADP-ribose/CDP-alcohol diphosphatase (Adprm), found in Mus musculus (Mouse).